The primary structure comprises 193 residues: CRIB domain-containing protein RIC5 (193 aa).

The region spanning 29–42 (IGIPTDVKHVAHIG) is the CRIB domain. Residues 42–193 (GWEGPSATTP…CAGLGSSTGR (152 aa)) are disordered. Residues 55–67 (HDFKPTDQTKTET) are compositionally biased toward basic and acidic residues. Residues 90-100 (STGNNSPTESP) show a composition bias toward polar residues. Residues 123-134 (GSGSESGSGLEL) are compositionally biased toward low complexity.

As to quaternary structure, interacts with ARAC11/ROP1. As to expression, expressed in flowers and pollen.

It is found in the cell membrane. Functions as a downstream effector of Rho-related GTP binding proteins of the 'Rho of Plants' (ROPs) family. Participates in the propagation of ROP GTPase signals in specific cellular responses. Is involved in pollen tube growth regulation through its interaction with ARAC11/ROP1. The protein is CRIB domain-containing protein RIC5 (RIC5) of Arabidopsis thaliana (Mouse-ear cress).